The primary structure comprises 244 residues: MSVKRLIITAVAAEADAVASGLDGAQPHPQGSANVRHTATADILVAGVGSAAAAAATAAALARRHYSLVICTGIAGGIGIAGIGDIVVADAVHPADLGAMSPDGFIPLEHLGIATTANAIDPPVVEELTGPLRYAGLAPVIGGILTVNTVTGTDAHADDLRRRYPGAVAEAMEGYGVAVAATRAGVRYGELRVVSNRVGRRDRRAWDIPGALRRLEHAFAALGAAWCNDGSGQAAAREIDGGCP.

Belongs to the PNP/UDP phosphorylase family. Futalosine hydrolase subfamily.

The enzyme catalyses futalosine + H2O = dehypoxanthine futalosine + hypoxanthine. It functions in the pathway quinol/quinone metabolism; menaquinone biosynthesis. Functionally, catalyzes the hydrolysis of futalosine (FL) to dehypoxanthine futalosine (DHFL) and hypoxanthine, a step in the biosynthesis of menaquinone (MK, vitamin K2). Cannot directly use aminodeoxyfutalosine (AFL) as a substrate. The sequence is that of Futalosine hydrolase from Acidothermus cellulolyticus (strain ATCC 43068 / DSM 8971 / 11B).